The following is a 274-amino-acid chain: Carboxy-S-adenosyl-L-methionine synthase (274 aa).

Residues Tyr59, 93 to 95 (GCS), 149 to 150 (DI), Asn164, and Arg231 each bind S-adenosyl-L-methionine.

It belongs to the class I-like SAM-binding methyltransferase superfamily. Cx-SAM synthase family. In terms of assembly, homodimer.

The catalysed reaction is prephenate + S-adenosyl-L-methionine = carboxy-S-adenosyl-L-methionine + 3-phenylpyruvate + H2O. Catalyzes the conversion of S-adenosyl-L-methionine (SAM) to carboxy-S-adenosyl-L-methionine (Cx-SAM). The polypeptide is Carboxy-S-adenosyl-L-methionine synthase (Psychrobacter sp. (strain PRwf-1)).